The following is a 149-amino-acid chain: Protein cornichon homolog 2 (149 aa).

3 helical membrane passes run 3-23 (IELI…GLTA), 59-79 (ALCA…MAPV), and 117-137 (YFSL…TLFI).

This sequence belongs to the cornichon family.

Its subcellular location is the endoplasmic reticulum membrane. The protein localises to the golgi apparatus membrane. In terms of biological role, acts as a cargo receptor necessary for the transportation of secretory proteins from the endoplasmic reticulum (ER) in COPII-coated vesicles targeted to the Golgi apparatus. This Oryza sativa subsp. japonica (Rice) protein is Protein cornichon homolog 2.